Consider the following 295-residue polypeptide: Methylamine utilization protein MauJ (295 aa).

It functions in the pathway one-carbon metabolism; methylamine degradation. In Methylorubrum extorquens (strain ATCC 14718 / DSM 1338 / JCM 2805 / NCIMB 9133 / AM1) (Methylobacterium extorquens), this protein is Methylamine utilization protein MauJ (mauJ).